A 412-amino-acid chain; its full sequence is Alanyl-tRNA editing protein Aarsd1-B (412 aa).

H108, H112, C208, and H212 together coordinate Zn(2+).

It belongs to the class-II aminoacyl-tRNA synthetase family. Alax-L subfamily. Zn(2+) serves as cofactor.

The protein localises to the cytoplasm. In terms of biological role, functions in trans to edit the amino acid moiety from incorrectly charged tRNA(Ala). This chain is Alanyl-tRNA editing protein Aarsd1-B (aarsd1-b), found in Xenopus laevis (African clawed frog).